Here is a 299-residue protein sequence, read N- to C-terminus: Methionyl-tRNA formyltransferase (299 aa).

109 to 112 lines the (6S)-5,6,7,8-tetrahydrofolate pocket; the sequence is SLLP.

Belongs to the Fmt family.

The enzyme catalyses L-methionyl-tRNA(fMet) + (6R)-10-formyltetrahydrofolate = N-formyl-L-methionyl-tRNA(fMet) + (6S)-5,6,7,8-tetrahydrofolate + H(+). In terms of biological role, attaches a formyl group to the free amino group of methionyl-tRNA(fMet). The formyl group appears to play a dual role in the initiator identity of N-formylmethionyl-tRNA by promoting its recognition by IF2 and preventing the misappropriation of this tRNA by the elongation apparatus. The protein is Methionyl-tRNA formyltransferase of Wolbachia pipientis subsp. Culex pipiens (strain wPip).